The chain runs to 179 residues: MNQLDLIKSSIKSIPDYPKAGIIFRDITSLLEVPEAFKATVDAIVAEFKDKGITKVVGTESRGFIFGAPVALALGVPFVLVRKPKKLPRAVISQSYALEYGEDTLEIHLDSVKENDNVLMVDDLLATGGTIDATAKLIRRLGGKVEHAAFVIWLPDLGGKERLEKEGINSFTLVEFAGH.

It belongs to the purine/pyrimidine phosphoribosyltransferase family. Homodimer.

It localises to the cytoplasm. The enzyme catalyses AMP + diphosphate = 5-phospho-alpha-D-ribose 1-diphosphate + adenine. The protein operates within purine metabolism; AMP biosynthesis via salvage pathway; AMP from adenine: step 1/1. Functionally, catalyzes a salvage reaction resulting in the formation of AMP, that is energically less costly than de novo synthesis. The polypeptide is Adenine phosphoribosyltransferase (Actinobacillus pleuropneumoniae serotype 5b (strain L20)).